Reading from the N-terminus, the 377-residue chain is Prostaglandin E synthase 2 (377 aa).

The Lumenal portion of the chain corresponds to 1–65 (MAAACTRTLG…LAAPVRGSGR (65 aa)). The chain crosses the membrane as a helical span at residues 66–83 (VLGCAFLLGGGFGLYQTI). The GST N-terminal domain occupies 105 to 182 (LKLTLYQYKT…ALKTYISSKD (78 aa)). Residues Val153 and 166 to 167 (DS) contribute to the glutathione site. A GST C-terminal domain is found at 266–377 (YIVREGKFGS…RMQKATQHVS (112 aa)).

It belongs to the GST superfamily. As to quaternary structure, homodimer.

Its subcellular location is the golgi apparatus membrane. It carries out the reaction prostaglandin H2 = prostaglandin E2. The catalysed reaction is prostaglandin H2 = (12S)-hydroxy-(5Z,8E,10E)-heptadecatrienoate + malonaldehyde. It functions in the pathway lipid metabolism; prostaglandin biosynthesis. Its activity is regulated as follows. Isomerase activity is increased by sulfhydril compounds. Dithiothreitol (DTT) is most effective, followed by glutathione (GSH) and 2-mercaptoethanol. In terms of biological role, isomerase that catalyzes the conversion of PGH2 into the more stable prostaglandin E2 (PGE2) (in vitro). The biological function and the GSH-dependent property of PTGES2 is still under debate. In vivo, PTGES2 could form a complex with GSH and heme and would not participate in PGE2 synthesis but would catalyze the degradation of prostaglandin E2 H2 (PGH2) to 12(S)-hydroxy-5(Z),8(E),10(E)-heptadecatrienoic acid (HHT) and malondialdehyde (MDA). The sequence is that of Prostaglandin E synthase 2 (ptges2) from Danio rerio (Zebrafish).